The primary structure comprises 140 residues: MRRERPELRDAEGRLRLRAGCLVTAWPRAPSGAGSWSMAAASPWPASWGFPDASSTVPSLCTEARAGRGGPATARSRVSADSQGGRAGSSSPSSALRLCCAGPSQAHPGPSPAVLPGRCGLLGSFPRPPAPQGRWGPSLG.

Residues threonine 62 to glycine 140 are disordered. Positions proline 71–serine 94 are enriched in low complexity.

This is an uncharacterized protein from Homo sapiens (Human).